The primary structure comprises 520 residues: Ribonuclease Y (520 aa).

The helical transmembrane segment at 4-24 (TMFTIISILLSLICLVVGYFV) threads the bilayer. A KH domain is found at 210 to 273 (TVSVVNLPND…ETARIALDKL (64 aa)). The HD domain occupies 336–429 (VLKHSIEVAH…VAAADALSAA (94 aa)).

Belongs to the RNase Y family.

The protein resides in the cell membrane. Its function is as follows. Endoribonuclease that initiates mRNA decay. The sequence is that of Ribonuclease Y from Bacillus pumilus (strain SAFR-032).